The primary structure comprises 84 residues: Putative membrane protein insertion efficiency factor (84 aa).

Belongs to the UPF0161 family.

It is found in the cell inner membrane. Functionally, could be involved in insertion of integral membrane proteins into the membrane. The protein is Putative membrane protein insertion efficiency factor of Shewanella halifaxensis (strain HAW-EB4).